Here is a 176-residue protein sequence, read N- to C-terminus: Photosystem I assembly protein Ycf4 (176 aa).

2 consecutive transmembrane segments (helical) span residues 22 to 42 (FVWA…GTAS) and 48 to 68 (LIAF…GLFI).

It belongs to the Ycf4 family.

The protein localises to the plastid thylakoid membrane. Functionally, seems to be required for the assembly of the photosystem I complex. The chain is Photosystem I assembly protein Ycf4 from Cuscuta gronovii (Common dodder).